Consider the following 315-residue polypeptide: Rhomboid-related protein 4 (315 aa).

Residues 1-21 (MQRRTRGINTGLLLLLSQVFQ) are Cytoplasmic-facing. A helical transmembrane segment spans residues 22-42 (IGINNIPPVTLATLAVNVWFF). The Lumenal segment spans residues 43–103 (LNPWKPLYHS…KLERRLGSRW (61 aa)). A helical transmembrane segment spans residues 104 to 124 (FAYVIATFSLLTGVVYLLLQF). Residues 125–137 (TVAELLNQPDFKR) are Cytoplasmic-facing. A helical membrane pass occupies residues 138-154 (NCAVGFSGVLFALKVLS). Serine 144 functions as the Nucleophile in the catalytic mechanism. Residues 155-180 (NHYCPGGFVNILGFPVPNRFACWAEL) lie on the Lumenal side of the membrane. Residues 181–201 (VAIHFCTPGTSFAGHLAGILV) traverse the membrane as a helical segment. Histidine 195 is an active-site residue. Topologically, residues 202–315 (GLMYTQGPLK…RQRLHRFDGQ (114 aa)) are cytoplasmic. The segment at 269–284 (SEEEQLERALRASIWD) is ubiquitin-binding domain (UBD). The VCP/p97-interacting motif (VIM) stretch occupies residues 301 to 315 (PEEMRRQRLHRFDGQ).

It belongs to the peptidase S54 family. In terms of assembly, interacts with BIK and STEAP3. Interacts (via C-terminal domain) with VCP/P97. Interacts with ubiquitin and ubiquitinated proteins. As to expression, expressed in testis (at protein level). Expressed in intestine, lung, brain, kidney, epididymis, stomach, muscle, spleen, liver, heart and testis.

It localises to the endoplasmic reticulum membrane. It is found in the mitochondrion membrane. It catalyses the reaction Cleaves type-1 transmembrane domains using a catalytic dyad composed of serine and histidine that are contributed by different transmembrane domains.. With respect to regulation, inhibited by aprotinin. In terms of biological role, intramembrane-cleaving serine protease that cleaves single transmembrane or multi-pass membrane proteins in the hydrophobic plane of the membrane, luminal loops and juxtamembrane regions. Involved in regulated intramembrane proteolysis and the subsequent release of functional polypeptides from their membrane anchors. Functional component of endoplasmic reticulum-associated degradation (ERAD) for misfolded membrane proteins. Required for the degradation process of some specific misfolded endoplasmic reticulum (ER) luminal proteins. Participates in the transfer of misfolded proteins from the ER to the cytosol, where they are destroyed by the proteasome in a ubiquitin-dependent manner. Functions in BIK, MPZ, PKD1, PTCRA, RHO, STEAP3 and TRAC processing. Involved in the regulation of exosomal secretion; inhibits the TSAP6-mediated secretion pathway. Involved in the regulation of apoptosis; modulates BIK-mediated apoptotic activity. Also plays a role in the regulation of spermatogenesis; inhibits apoptotic activity in spermatogonia. The chain is Rhomboid-related protein 4 (Rhbdd1) from Mus musculus (Mouse).